Here is a 405-residue protein sequence, read N- to C-terminus: Corticosteroid-binding globulin (405 aa).

Positions 1–22 (MPLLLYTCLLWLPTSGLWTVQA) are cleaved as a signal peptide. Residues asparagine 31, asparagine 96, and asparagine 176 are each glycosylated (N-linked (GlcNAc...) asparagine). Glutamine 254 is a cortisol binding site. An N-linked (GlcNAc...) asparagine glycan is attached at asparagine 260. Residue asparagine 286 participates in cortisol binding. Asparagine 330 and asparagine 369 each carry an N-linked (GlcNAc...) asparagine glycan. Cortisol-binding residues include histidine 390 and tryptophan 393.

It belongs to the serpin family. In terms of processing, N-glycosylated; binds 5 oligosaccharide chains. Post-translationally, glycosylation in position Asn-260 is needed for steroid binding. Plasma; synthesized in liver. Has also been identified in a number of glycocorticoid responsive cells.

The protein resides in the secreted. Functionally, major transport protein for glucocorticoids and progestins in the blood of almost all vertebrate species. In Homo sapiens (Human), this protein is Corticosteroid-binding globulin (SERPINA6).